Reading from the N-terminus, the 472-residue chain is SURF6 homolog gldi-11 (472 aa).

Disordered regions lie at residues leucine 53–leucine 73, lysine 89–isoleucine 232, lysine 249–leucine 350, and leucine 414–leucine 472. Residues lysine 95–lysine 106 show a composition bias toward low complexity. The segment covering arginine 107 to serine 132 has biased composition (basic and acidic residues). Residues aspartate 133–glutamate 150 are compositionally biased toward acidic residues. Residues proline 151–glutamate 160 are compositionally biased toward basic and acidic residues. Composition is skewed to acidic residues over residues serine 161–glutamate 175 and glutamate 182–glutamate 194. The segment covering serine 197–serine 210 has biased composition (polar residues). Basic and acidic residues predominate over residues glycine 212–leucine 221. Residues leucine 274 to glutamine 285 show a composition bias toward basic residues. The segment covering arginine 286–valine 305 has biased composition (basic and acidic residues). Basic residues predominate over residues leucine 414–glutamine 426. The segment covering lysine 427–glutamine 443 has biased composition (basic and acidic residues). The segment covering lysine 459–leucine 472 has biased composition (basic residues).

The protein belongs to the SURF6 family.

It localises to the nucleus. Its subcellular location is the nucleoplasm. Functionally, binds to both DNA and RNA in vitro, with a stronger binding capacity for RNA. May represent a nucleolar constitutive protein involved in ribosomal biosynthesis or assembly. The sequence is that of SURF6 homolog gldi-11 from Caenorhabditis elegans.